The following is a 1102-amino-acid chain: Avirulence protein AvrXa10 (1102 aa).

Disordered stretches follow at residues 1–68 (MDPI…SAGS) and 127–151 (ARPPRAKPAPRRRAAQPSDASPAAQ). The span at 130-140 (PRAKPAPRRRA) shows a compositional bias: basic residues. Residues 141–151 (AQPSDASPAAQ) are compositionally biased toward low complexity. 15 Core repeat repeats span residues 288 to 321 (LTPDQVVAIASNIGGNQALETVQRLLPVLCQAHG), 322 to 355 (LTPDQVVAIASHGGGKQALETVQRLLPVLCQAHG), 356 to 389 (LTPDQVVAIASNIGGKQALATVQRLLPVLCQDHG), 390 to 423 (LTPDQVVAIASHGGGKQALETVQRLLPVLCQDHG), 424 to 457 (LTPDQVVAIASNIGGKQALETVQRLLPVLCQDHG), 458 to 491 (LTPDQVVAIASNIGGKQALETVQRLLPVLCQDHG), 492 to 525 (LTPDQVVAIASNNGGKQALETVQRLLPVLCQTHG), 526 to 559 (LTPDQVVAIANHDGGKQALETVQRLLPVLCQDHG), 560 to 593 (LTPDQVVAIASNIGGKQALATVQRLLPVLCQAHG), 594 to 627 (LTPDQVVAIASHDGGKQALETVQRLLPVLCQDHG), 628 to 661 (LTPDQVVAIASNNGGKQALETVQRLLPVLCQDHG), 662 to 695 (LTPAQVVAIANHGGGKQALETVQRLLPVLCQDHG), 696 to 729 (LTPVQVVAIASNSGGKQALETVQRLLPVLCQDHG), 730 to 763 (LTPVQVVAIASNGGGKQALATVQRLLPVLCQDHG), and 764 to 797 (LTPVQVVAIASHDGGKQALETVQRLLPVLCQDHG). One copy of the Core repeat 15.5 repeat lies at 798–809 (LTPDQVVAIASN). Residues 951 to 954 (KRVK) carry the Nuclear localization sequence A (NLSA) motif. Over residues 978–990 (DLDAPSPMHEGDQ) the composition is skewed to basic and acidic residues. A disordered region spans residues 978 to 1021 (DLDAPSPMHEGDQTRASSRKRSRSDRAVTGPSTQQSFEVRVPEQ). Positions 997–1000 (KRSR) match the Nuclear localization sequence B (NLSB) motif. Positions 1034–1037 (KRPR) match the Nuclear localization sequence C (NLSC) motif. The segment at 1063-1093 (WEQDAAPFAGAADDFPAFNEEELAWLMELLP) is activation domain.

Belongs to the transcription activator-like effector (TALE) family.

The protein resides in the secreted. It localises to the host nucleus. Its function is as follows. Avirulence protein. Induces the hypersensitive response (HR)in rice plants carrying the resistance gene Xa10. Activity depends on the presence of the core repeat domains; replacement with repeat domains from other proteins (AvrBs3 of X.euvesicatoria (AC P14727) or AvrXa7 of this organism) does not elicit the HR. Probably acts as a transcription factor in its host plant (rice) to induce plant resistance or disease. The polypeptide is Avirulence protein AvrXa10 (Xanthomonas oryzae pv. oryzae).